The chain runs to 71 residues: Small ribosomal subunit protein bS21 (71 aa).

Residues lysine 40–tyrosine 71 form a disordered region. The segment covering arginine 45–tyrosine 71 has biased composition (basic residues).

It belongs to the bacterial ribosomal protein bS21 family.

In Xylella fastidiosa (strain M23), this protein is Small ribosomal subunit protein bS21.